The chain runs to 1399 residues: Alpha-glucan water dikinase 1, chloroplastic (1399 aa).

A chloroplast-targeting transit peptide spans 1–75 (MSNSVVHNLL…GRPLSFVPRA (75 aa)). V76 is subject to N-acetylvaline. The tract at residues 265 to 306 (LLKKDNSNESPKSNGTSSSGREEKKKVSKQPERKKNYNTDKI) is disordered. The span at 272-283 (NESPKSNGTSSS) shows a compositional bias: polar residues. The span at 284–306 (GREEKKKVSKQPERKKNYNTDKI) shows a compositional bias: basic and acidic residues. The active-site Tele-phosphohistidine intermediate is the H1004.

The protein belongs to the PEP-utilizing enzyme family. In terms of assembly, homodimer. The cofactor is Mg(2+).

It localises to the plastid. Its subcellular location is the chloroplast. The enzyme catalyses [(1-&gt;4)-alpha-D-glucosyl](n) + n ATP + n H2O = [(1-&gt;4)-6-phospho-alpha-D-glucosyl](n) + n AMP + n phosphate + 2n H(+). Functionally, mediates the incorporation of phosphate into starch-like alpha-glucan, mostly at the C-6 position of glucose units. Acts as an overall regulator of starch mobilization. Required for starch degradation, suggesting that the phosphate content of starch regulates its degradability. The polypeptide is Alpha-glucan water dikinase 1, chloroplastic (Arabidopsis thaliana (Mouse-ear cress)).